The chain runs to 465 residues: UDP-N-acetylmuramate--L-alanine ligase (465 aa).

Position 114 to 120 (Gly-114 to Thr-120) interacts with ATP.

The protein belongs to the MurCDEF family.

The protein resides in the cytoplasm. It catalyses the reaction UDP-N-acetyl-alpha-D-muramate + L-alanine + ATP = UDP-N-acetyl-alpha-D-muramoyl-L-alanine + ADP + phosphate + H(+). It functions in the pathway cell wall biogenesis; peptidoglycan biosynthesis. Functionally, cell wall formation. This is UDP-N-acetylmuramate--L-alanine ligase from Chelativorans sp. (strain BNC1).